Here is a 312-residue protein sequence, read N- to C-terminus: Lipoyl synthase (312 aa).

[4Fe-4S] cluster contacts are provided by cysteine 37, cysteine 42, cysteine 48, cysteine 67, cysteine 71, cysteine 74, and serine 281. The 219-residue stretch at 52–270 (RDGPGTATFM…AVAEREFDFL (219 aa)) folds into the Radical SAM core domain.

It belongs to the radical SAM superfamily. Lipoyl synthase family. [4Fe-4S] cluster serves as cofactor.

The protein localises to the cytoplasm. It carries out the reaction [[Fe-S] cluster scaffold protein carrying a second [4Fe-4S](2+) cluster] + N(6)-octanoyl-L-lysyl-[protein] + 2 oxidized [2Fe-2S]-[ferredoxin] + 2 S-adenosyl-L-methionine + 4 H(+) = [[Fe-S] cluster scaffold protein] + N(6)-[(R)-dihydrolipoyl]-L-lysyl-[protein] + 4 Fe(3+) + 2 hydrogen sulfide + 2 5'-deoxyadenosine + 2 L-methionine + 2 reduced [2Fe-2S]-[ferredoxin]. It functions in the pathway protein modification; protein lipoylation via endogenous pathway; protein N(6)-(lipoyl)lysine from octanoyl-[acyl-carrier-protein]: step 2/2. Functionally, catalyzes the radical-mediated insertion of two sulfur atoms into the C-6 and C-8 positions of the octanoyl moiety bound to the lipoyl domains of lipoate-dependent enzymes, thereby converting the octanoylated domains into lipoylated derivatives. The protein is Lipoyl synthase of Halorubrum lacusprofundi (strain ATCC 49239 / DSM 5036 / JCM 8891 / ACAM 34).